Here is a 407-residue protein sequence, read N- to C-terminus: MTAVFRVGLVRLVSRATQSPNLLQAQTNALPAAFQQRCSISGKTMRGGPRVPKAAPYPYKTKKYSVFNAIFDKTSKRFDENSKVICVEGPIAAGKSKFAKELAEELDMEYYPAVDLDLIYINSYGYDMRKLDPQLPPSCRSYDVRNFCLDPSHDLAAQFQIRMYMLRYSQYIDALQHVLSTGQGVVLERSPYSDFVFMEAMFRQGYLSRGARSVYNELRQNTIGELLKPHLVIYLDLPVDAVKKQIKARNVDYEVQSKVFSDAYLSDLEQLYKQQYLKDISTHAELLIYDWTAGGETEVVVEDIERIDFNQFEADIHNKKMLDWRFPLEAEWCEARIKYCHEKPDLMNYFNVPRFDVPELVRSADDGKVWRDVWFNAPGMKYRPGYNADMGDEGLLTKTKIGINQGI.

The N-terminal 60 residues, 1 to 60, are a transit peptide targeting the mitochondrion; sequence MTAVFRVGLVRLVSRATQSPNLLQAQTNALPAAFQQRCSISGKTMRGGPRVPKAAPYPYK.

The protein belongs to the complex I NDUFA10 subunit family. In terms of assembly, complex I is composed of 45 different subunits. This a component of the hydrophobic protein fraction. Forms a complex including sicily, ND-42 and Hsp83; the complex is necessary to chaperone ND-42 in the cytoplasm before mitochondrial import; the interaction between sicily and ND-42 is direct and occurs preferably between the unprocessed forms in the cytoplasm. The cofactor is FAD. In terms of tissue distribution, expressed in muscles (at protein level).

It is found in the mitochondrion matrix. The protein localises to the cytoplasm. In terms of biological role, accessory subunit of the mitochondrial membrane respiratory chain NADH dehydrogenase (Complex I), that is believed not to be involved in catalysis. Complex I functions in the transfer of electrons from NADH to the respiratory chain. The immediate electron acceptor for the enzyme is believed to be ubiquinone. This chain is NADH dehydrogenase [ubiquinone] 1 alpha subcomplex subunit 10, mitochondrial, found in Drosophila melanogaster (Fruit fly).